The primary structure comprises 320 residues: Heterogeneous nuclear ribonucleoprotein A1 (320 aa).

Met1 is subject to N-acetylmethionine. Position 2 is an N-acetylserine; in Heterogeneous nuclear ribonucleoprotein A1, N-terminally processed (Ser2). At Ser2 the chain carries Phosphoserine. An N6-acetyllysine; alternate modification is found at Lys3. Lys3 participates in a covalent cross-link: Glycyl lysine isopeptide (Lys-Gly) (interchain with G-Cter in SUMO2); alternate. 2 positions are modified to phosphoserine: Ser4 and Ser6. The segment at 4–94 (SESPKEPEQL…EPKRAVSRED (91 aa)) is globular A domain. Lys8 participates in a covalent cross-link: Glycyl lysine isopeptide (Lys-Gly) (interchain with G-Cter in SUMO2). RRM domains are found at residues 14–97 (RKLF…DSQR) and 105–184 (KKIF…LSKQ). The residue at position 22 (Ser22) is a Phosphoserine. Residue Lys78 forms a Glycyl lysine isopeptide (Lys-Gly) (interchain with G-Cter in SUMO2) linkage. The tract at residues 95-185 (SQRPGAHLTV…EVRKALSKQE (91 aa)) is globular B domain. Lys113 participates in a covalent cross-link: Glycyl lysine isopeptide (Lys-Gly) (interchain with G-Cter in SUMO). Glycyl lysine isopeptide (Lys-Gly) (interchain with G-Cter in SUMO2) cross-links involve residues Lys179 and Lys183. Residues 182 to 216 (SKQEMASASSSQRGRSGSGNFGGGRGGGFGGNDNF) form a disordered region. Ser192 carries the post-translational modification Phosphoserine; by MKNK2. Asymmetric dimethylarginine; alternate is present on Arg194. Residue Arg194 is modified to Dimethylated arginine; alternate. At Arg194 the chain carries Omega-N-methylarginine; alternate. The segment covering 197–216 (SGSGNFGGGRGGGFGGNDNF) has biased composition (gly residues). Ser199 carries the phosphoserine modification. Arg206, Arg218, Arg225, and Arg232 each carry asymmetric dimethylarginine; alternate. At Arg206 the chain carries Dimethylated arginine; alternate. Residues Arg206, Arg218, Arg225, and Arg232 each carry the omega-N-methylarginine; alternate modification. An RNA-binding RGG-box region spans residues 218 to 240 (RGGNFSGRGGFGGSRGGGGYGGS). At Arg225 the chain carries Dimethylated arginine; alternate. The interval 268–305 (NQSSNFGPMKGGNFGGRSSGPYGGGGQYFAKPRNQGGY) is nuclear targeting sequence. Residues 274-320 (GPMKGGNFGGRSSGPYGGGGQYFAKPRNQGGYGGSSSSSSYGSGRRF) are disordered. The segment covering 276–294 (MKGGNFGGRSSGPYGGGGQ) has biased composition (gly residues). Arg284 is subject to Omega-N-methylarginine. Ser285 is subject to Phosphoserine. The residue at position 298 (Lys298) is an N6-acetyllysine; alternate. A Glycyl lysine isopeptide (Lys-Gly) (interchain with G-Cter in SUMO2); alternate cross-link involves residue Lys298. Residue Arg300 is modified to Omega-N-methylarginine. The span at 308-320 (SSSSSSYGSGRRF) shows a compositional bias: low complexity. Ser309 carries the phosphoserine modification. Phosphoserine; by MKNK2 is present on residues Ser310, Ser311, and Ser312. Residues Ser313 and Ser316 each carry the phosphoserine modification. Arg318 is modified (omega-N-methylarginine).

As to quaternary structure, identified in the spliceosome C complex. Identified in a IGF2BP1-dependent mRNP granule complex containing untranslated mRNAs. Interacts with SEPT6. Interacts with C9orf72. Interacts with KHDRBS1. Interacts with UBQLN2. Interacts with PPIA/CYPA. In terms of processing, sumoylated.

It localises to the nucleus. Its subcellular location is the cytoplasm. Its function is as follows. Involved in the packaging of pre-mRNA into hnRNP particles, transport of poly(A) mRNA from the nucleus to the cytoplasm and modulation of splice site selection. Plays a role in the splicing of pyruvate kinase PKM by binding repressively to sequences flanking PKM exon 9, inhibiting exon 9 inclusion and resulting in exon 10 inclusion and production of the PKM M2 isoform. Binds to the IRES and thereby inhibits the translation of the apoptosis protease activating factor APAF1. May bind to specific miRNA hairpins. The sequence is that of Heterogeneous nuclear ribonucleoprotein A1 (Hnrnpa1) from Mus musculus (Mouse).